A 397-amino-acid chain; its full sequence is Argininosuccinate synthase (397 aa).

8-16 (AYSGGLDTS) is a binding site for ATP. Tyr87 serves as a coordination point for L-citrulline. Gly117 provides a ligand contact to ATP. Thr119, Asn123, and Asp124 together coordinate L-aspartate. Asn123 lines the L-citrulline pocket. L-citrulline-binding residues include Arg127, Ser175, Glu259, and Tyr271.

This sequence belongs to the argininosuccinate synthase family. Type 1 subfamily. Homotetramer.

The protein localises to the cytoplasm. It catalyses the reaction L-citrulline + L-aspartate + ATP = 2-(N(omega)-L-arginino)succinate + AMP + diphosphate + H(+). The protein operates within amino-acid biosynthesis; L-arginine biosynthesis; L-arginine from L-ornithine and carbamoyl phosphate: step 2/3. This chain is Argininosuccinate synthase, found in Streptomyces clavuligerus.